We begin with the raw amino-acid sequence, 154 residues long: Xanthine-guanine phosphoribosyltransferase (154 aa).

5-phospho-alpha-D-ribose 1-diphosphate contacts are provided by residues Arg37 to Gly38 and Asp90 to Thr98. Mg(2+) is bound at residue Asp91. Guanine is bound by residues Asp94 and Ile137. Xanthine is bound by residues Asp94 and Ile137. Residues Asp94 to Thr98 and Trp136 to Ile137 each bind GMP.

The protein belongs to the purine/pyrimidine phosphoribosyltransferase family. XGPT subfamily. In terms of assembly, homotetramer. It depends on Mg(2+) as a cofactor.

It is found in the cell inner membrane. The enzyme catalyses GMP + diphosphate = guanine + 5-phospho-alpha-D-ribose 1-diphosphate. It carries out the reaction XMP + diphosphate = xanthine + 5-phospho-alpha-D-ribose 1-diphosphate. It catalyses the reaction IMP + diphosphate = hypoxanthine + 5-phospho-alpha-D-ribose 1-diphosphate. It participates in purine metabolism; GMP biosynthesis via salvage pathway; GMP from guanine: step 1/1. Its pathway is purine metabolism; XMP biosynthesis via salvage pathway; XMP from xanthine: step 1/1. Functionally, purine salvage pathway enzyme that catalyzes the transfer of the ribosyl-5-phosphate group from 5-phospho-alpha-D-ribose 1-diphosphate (PRPP) to the N9 position of the 6-oxopurines guanine and xanthine to form the corresponding ribonucleotides GMP (guanosine 5'-monophosphate) and XMP (xanthosine 5'-monophosphate), with the release of PPi. To a lesser extent, also acts on hypoxanthine. This Histophilus somni (strain 129Pt) (Haemophilus somnus) protein is Xanthine-guanine phosphoribosyltransferase.